Reading from the N-terminus, the 254-residue chain is Type III pantothenate kinase (254 aa).

Residue 6 to 13 participates in ATP binding; that stretch reads DVGNSNIV. Substrate is bound by residues Y100 and 107 to 110; that span reads GADR. Residue D109 is the Proton acceptor of the active site. D129 serves as a coordination point for K(+). An ATP-binding site is contributed by T132. Residue T184 participates in substrate binding.

Belongs to the type III pantothenate kinase family. Homodimer. The cofactor is NH4(+). K(+) serves as cofactor.

The protein resides in the cytoplasm. It carries out the reaction (R)-pantothenate + ATP = (R)-4'-phosphopantothenate + ADP + H(+). Its pathway is cofactor biosynthesis; coenzyme A biosynthesis; CoA from (R)-pantothenate: step 1/5. In terms of biological role, catalyzes the phosphorylation of pantothenate (Pan), the first step in CoA biosynthesis. This Geobacter sp. (strain M21) protein is Type III pantothenate kinase.